The primary structure comprises 1651 residues: Roundabout homolog 1 (1651 aa).

The N-terminal stretch at 1–25 (MKWKHLPLLVMISLLTLSKKHLLLA) is a signal peptide. The Extracellular portion of the chain corresponds to 26–897 (QLIPDPEDLE…QQISDVVKQP (872 aa)). Residues 31 to 66 (PEDLERGNDNGTPAPTSDNDDNSLGYTGSRLRQEDF) are disordered. Over residues 39–56 (DNGTPAPTSDNDDNSLGY) the composition is skewed to polar residues. 5 Ig-like C2-type domains span residues 68 to 164 (PRIV…ASLE), 170 to 257 (DDFR…ADVT), 262 to 346 (PSFV…ATLT), 351 to 446 (PHFV…LEVT), and 455 to 541 (PVIR…AYIE). Cys-89 and Cys-147 are disulfide-bonded. An N-linked (GlcNAc...) asparagine glycan is attached at Asn-160. 3 disulfides stabilise this stretch: Cys-191–Cys-240, Cys-283–Cys-330, and Cys-372–Cys-428. Asn-463 carries N-linked (GlcNAc...) asparagine glycosylation. Cys-476 and Cys-525 are oxidised to a cystine. 3 consecutive Fibronectin type-III domains span residues 563–657 (APSK…TQDV), 676–773 (VVLH…TLEE), and 778–874 (PPRS…LDSH). Asn-790, Asn-820, and Asn-827 each carry an N-linked (GlcNAc...) asparagine glycan. The helical transmembrane segment at 898 to 918 (AFIAGIGAACWIILMVFSIWL) threads the bilayer. Residues 919–1651 (YRHRKKRNGL…NNEELEETES (733 aa)) lie on the Cytoplasmic side of the membrane. Position 940 is a phosphoserine (Ser-940). Thr-948 is subject to Phosphothreonine. Tyr-1038 is modified (phosphotyrosine). Ser-1055 is subject to Phosphoserine. Tyr-1073 is modified (phosphotyrosine). The disordered stretch occupies residues 1086–1107 (NMNNGGGDSSEKHWKPPGQQKQ). The residue at position 1114 (Tyr-1114) is a Phosphotyrosine. Disordered stretches follow at residues 1137 to 1337 (PYNH…ADME), 1352 to 1397 (EQTP…DGSF), and 1420 to 1651 (RRQM…ETES). The span at 1147-1163 (GGSYNSSDRGSSTSGSQ) shows a compositional bias: low complexity. Over residues 1186–1196 (LPPPPAHPPPH) the composition is skewed to pro residues. The residue at position 1240 (Thr-1240) is a Phosphothreonine. The span at 1255 to 1269 (YSHQSTATLTPSPQE) shows a compositional bias: polar residues. Residues 1281–1293 (DLGHMPHPPDRRR) show a composition bias toward basic and acidic residues. Residues 1296-1307 (VSPPPPPRPISP) show a composition bias toward pro residues. Ser-1297 carries the post-translational modification Phosphoserine. The span at 1322-1336 (MDTDAPEEEEDEADM) shows a compositional bias: acidic residues. The span at 1384–1397 (SSGRSSVSSSDGSF) shows a compositional bias: low complexity. The segment covering 1438–1451 (PRPTSPVSTDSNMS) has biased composition (polar residues). Residues 1459-1470 (RPTKKQKHQPGH) are compositionally biased toward basic residues. Pro residues predominate over residues 1480–1490 (LPPPPVPPPAI). Composition is skewed to basic and acidic residues over residues 1516–1541 (ARAD…RQVT) and 1549–1573 (DPRE…RDLP). Positions 1592–1601 (FPTSNNPRDP) are enriched in polar residues. Residues 1602–1614 (SSSSSMSSRGSGS) are compositionally biased toward low complexity. Residues 1642-1651 (NNEELEETES) are compositionally biased toward acidic residues.

The protein belongs to the immunoglobulin superfamily. ROBO family. Homodimer. Dimerization is mediated by the extracellular domain and is independent of SLIT liganding. Interacts with SLIT1. Interacts with SLIT2. Interacts with FLRT3. Interacts with MYO9B (via Rho-GAP domain). Post-translationally, ubiquitinated. May be deubiquitinated by USP33. Expressed in embryonal brain and spinal cord.

The protein localises to the cell membrane. It is found in the cell projection. It localises to the axon. The protein resides in the endoplasmic reticulum-Golgi intermediate compartment membrane. In terms of biological role, receptor for SLIT1 and SLIT2 that mediates cellular responses to molecular guidance cues in cellular migration, including axonal navigation at the ventral midline of the neural tube and projection of axons to different regions during neuronal development. Interaction with the intracellular domain of FLRT3 mediates axon attraction towards cells expressing NTN1. In axon growth cones, the silencing of the attractive effect of NTN1 by SLIT2 may require the formation of a ROBO1-DCC complex. Plays a role in the regulation of cell migration via its interaction with MYO9B; inhibits MYO9B-mediated stimulation of RHOA GTPase activity, and thereby leads to increased levels of active, GTP-bound RHOA. May be required for lung development. The sequence is that of Roundabout homolog 1 (Robo1) from Rattus norvegicus (Rat).